Consider the following 166-residue polypeptide: MAVVAVFPALARMLAVSRRRLVSPSLSMTSCRRCYRGDSPTDSQKDMIEIPLPPWQERTDESIETKRARLLYESRKRGMLENCILLSLFAKEHLQHMTEKQLNLYDRLINEPSNDWDIYYWATEAKPAPEIFENEVMTLLRDFAKNKNKEQRLRAPDLEYLFEKPH.

Residues 1-29 (MAVVAVFPALARMLAVSRRRLVSPSLSMT) constitute a mitochondrion transit peptide.

The protein belongs to the SDHAF2 family. Interacts with SDHA within the SDH catalytic dimer.

It localises to the mitochondrion matrix. Plays an essential role in the assembly of succinate dehydrogenase (SDH), an enzyme complex (also referred to as respiratory complex II) that is a component of both the tricarboxylic acid (TCA) cycle and the mitochondrial electron transport chain, and which couples the oxidation of succinate to fumarate with the reduction of ubiquinone (coenzyme Q) to ubiquinol. Required for flavinylation (covalent attachment of FAD) of the flavoprotein subunit SDHA of the SDH catalytic dimer. The sequence is that of Succinate dehydrogenase assembly factor 2, mitochondrial from Bos taurus (Bovine).